Consider the following 153-residue polypeptide: Movement protein (153 aa).

Disordered regions lie at residues Met1–Pro24 and Ala107–Arg153. 2 stretches are compositionally biased toward polar residues: residues Ser109–Trp122 and Gly140–Arg153.

The protein belongs to the luteoviruses movement protein family.

Its subcellular location is the host nucleus envelope. Functionally, transports viral genome to neighboring plant cells directly through plasmosdesmata, without any budding. The movement protein allows efficient cell to cell propagation, by bypassing the host cell wall barrier. Acts as a suppressor of RNA-mediated gene silencing, also known as post-transcriptional gene silencing (PTGS), a mechanism of plant viral defense that limits the accumulation of viral RNAs. This Avena byzantina (Oat) protein is Movement protein.